A 487-amino-acid polypeptide reads, in one-letter code: MAKRSRNMESNSERSSRPKKKSKGDAKPEQPPYVQSAELDAVPQSEIDDFLKSNTIQISDPSIKETLRPITAFSYLPSDSNQLYGPLEHFSKPTPIQSVTWPYLFAGRDVIGVAETGSGKTLAFGVPCIRKVLEINASHSSFRISAVIITPTRELAMQIHDQLVKFTPNGVGLACIYGGASKDDQRRALKKASVIVATPGRLKDFHSDESLNLKKVKYLVLDEADRMLDKGFEQDIKDIVSAMPSSRKRQTVMFTATWPISVRKLATTFMKEPVTVTIGGDLSSDIRANTRIKQIVEVVKPENKESRLLSLLNQYQRGRNAMDKVLVFCLYKKEATRIERFIRSKGFKVAGIHGDMNQTERFNSLDAFKSGSVPVLVATDVAARGLDIPAVKLVLNVTFPLTVEDYVHRIGRTGRAGSDGLAITMFTENDKALSGGLVNILKGANQDIPEALLKFGTTVKKKQHDSYGAFFREADTMKTATKIKFDD.

Positions 1 to 40 (MAKRSRNMESNSERSSRPKKKSKGDAKPEQPPYVQSAELD) are disordered. The Q motif signature appears at 71–98 (TAFSYLPSDSNQLYGPLEHFSKPTPIQS). Residues 101 to 276 (WPYLFAGRDV…TTFMKEPVTV (176 aa)) enclose the Helicase ATP-binding domain. 114-121 (AETGSGKT) is an ATP binding site. Positions 222–225 (DEAD) match the DEAD box motif. The Helicase C-terminal domain maps to 291-456 (RIKQIVEVVK…DIPEALLKFG (166 aa)).

The protein belongs to the DEAD box helicase family. DDX5/DBP2 subfamily.

It is found in the nucleus. Its subcellular location is the nucleolus. It catalyses the reaction ATP + H2O = ADP + phosphate + H(+). Functionally, ATP-dependent RNA helicase required for 60S ribosomal subunit synthesis. Involved in efficient pre-rRNA processing, predominantly at site A3, which is necessary for the normal formation of 25S and 5.8S rRNAs. The sequence is that of ATP-dependent RNA helicase DBP3 (DBP3) from Ajellomyces capsulatus (strain NAm1 / WU24) (Darling's disease fungus).